The primary structure comprises 100 residues: NADH-quinone oxidoreductase subunit K (100 aa).

The next 3 helical transmembrane spans lie at 4-24, 28-48, and 60-80; these read LQHG…GLVI, LLFM…AFVV, and IMYI…LALL.

This sequence belongs to the complex I subunit 4L family. NDH-1 is composed of 13 different subunits. Subunits NuoA, H, J, K, L, M, N constitute the membrane sector of the complex.

It is found in the cell inner membrane. The catalysed reaction is a quinone + NADH + 5 H(+)(in) = a quinol + NAD(+) + 4 H(+)(out). Functionally, NDH-1 shuttles electrons from NADH, via FMN and iron-sulfur (Fe-S) centers, to quinones in the respiratory chain. The immediate electron acceptor for the enzyme in this species is believed to be ubiquinone. Couples the redox reaction to proton translocation (for every two electrons transferred, four hydrogen ions are translocated across the cytoplasmic membrane), and thus conserves the redox energy in a proton gradient. The protein is NADH-quinone oxidoreductase subunit K of Cronobacter sakazakii (strain ATCC BAA-894) (Enterobacter sakazakii).